The sequence spans 116 residues: NADH-ubiquinone oxidoreductase chain 3 (116 aa).

3 helical membrane passes run 3–23 (LITT…TISF), 56–76 (FFLI…LLPL), and 85–105 (PALT…GLIY).

This sequence belongs to the complex I subunit 3 family.

The protein resides in the mitochondrion membrane. The catalysed reaction is a ubiquinone + NADH + 5 H(+)(in) = a ubiquinol + NAD(+) + 4 H(+)(out). In terms of biological role, core subunit of the mitochondrial membrane respiratory chain NADH dehydrogenase (Complex I) that is believed to belong to the minimal assembly required for catalysis. Complex I functions in the transfer of electrons from NADH to the respiratory chain. The immediate electron acceptor for the enzyme is believed to be ubiquinone. The protein is NADH-ubiquinone oxidoreductase chain 3 (MT-ND3) of Oncorhynchus masou (Cherry salmon).